A 269-amino-acid polypeptide reads, in one-letter code: Energy-coupling factor transporter ATP-binding protein EcfA1 (269 aa).

One can recognise an ABC transporter domain in the interval 8 to 242; it reads IVFKNVSFQY…AEELTTIGLD (235 aa). 42–49 contributes to the ATP binding site; sequence GHNGSGKS.

Belongs to the ABC transporter superfamily. Energy-coupling factor EcfA family. In terms of assembly, forms a stable energy-coupling factor (ECF) transporter complex composed of 2 membrane-embedded substrate-binding proteins (S component), 2 ATP-binding proteins (A component) and 2 transmembrane proteins (T component).

The protein localises to the cell membrane. In terms of biological role, ATP-binding (A) component of a common energy-coupling factor (ECF) ABC-transporter complex. Unlike classic ABC transporters this ECF transporter provides the energy necessary to transport a number of different substrates. This is Energy-coupling factor transporter ATP-binding protein EcfA1 from Staphylococcus aureus (strain MSSA476).